Consider the following 321-residue polypeptide: MISGVLYALLAGLMWGLIFVGPLIVPEYPAMLQSMGRYLALGLIALPIAWLGRVRLRQLARRDWLTALMLTMMGNLIYYFCLASAIQRTGAPVSTMIIGTLPVVIPVFANLLYSQRDGKLAWGKLAPALICIGIGLACVNIAELNHGLPDFDWARYTSGIVLALVSVVCWAWYALRNARWLRENPDKHPMMWATAQALVTLPVSLIGYLVACYWLNTQTPDFSLPFGPRPLVFISLMVAIAVLCSWVGALCWNVASQLLPTVILGPLIVFETLAGLLYTFLLRQQMPPLMTLSGIALLVIGVVIAVRAKPEKPLTESVSES.

The Cytoplasmic segment spans residues 1 to 4 (MISG). Residues 5–25 (VLYALLAGLMWGLIFVGPLIV) form a helical membrane-spanning segment. In terms of domain architecture, EamA spans 13 to 141 (LMWGLIFVGP…IGIGLACVNI (129 aa)). The Periplasmic portion of the chain corresponds to 26-30 (PEYPA). The helical transmembrane segment at 31–51 (MLQSMGRYLALGLIALPIAWL) threads the bilayer. The Cytoplasmic portion of the chain corresponds to 52 to 65 (GRVRLRQLARRDWL). The helical transmembrane segment at 66–86 (TALMLTMMGNLIYYFCLASAI) threads the bilayer. At 87 to 92 (QRTGAP) the chain is on the periplasmic side. Residues 93-113 (VSTMIIGTLPVVIPVFANLLY) traverse the membrane as a helical segment. At 114–120 (SQRDGKL) the chain is on the cytoplasmic side. Residues 121 to 141 (AWGKLAPALICIGIGLACVNI) form a helical membrane-spanning segment. Over 142 to 154 (AELNHGLPDFDWA) the chain is Periplasmic. A helical membrane pass occupies residues 155-175 (RYTSGIVLALVSVVCWAWYAL). Topologically, residues 176–194 (RNARWLRENPDKHPMMWAT) are cytoplasmic. The helical transmembrane segment at 195 to 215 (AQALVTLPVSLIGYLVACYWL) threads the bilayer. Over 216–230 (NTQTPDFSLPFGPRP) the chain is Periplasmic. Residues 231–251 (LVFISLMVAIAVLCSWVGALC) form a helical membrane-spanning segment. The Cytoplasmic portion of the chain corresponds to 252–261 (WNVASQLLPT). Residues 262-282 (VILGPLIVFETLAGLLYTFLL) form a helical membrane-spanning segment. Over 283–285 (RQQ) the chain is Periplasmic. Residues 286–306 (MPPLMTLSGIALLVIGVVIAV) traverse the membrane as a helical segment. At 307–321 (RAKPEKPLTESVSES) the chain is on the cytoplasmic side.

It is found in the cell inner membrane. In Escherichia coli (strain K12), this protein is Inner membrane protein YtfF (ytfF).